Here is a 980-residue protein sequence, read N- to C-terminus: LRR receptor-like serine/threonine-protein kinase SIK1 (980 aa).

The signal sequence occupies residues 1–24 (MAAARAPWLWWWVVVVVGVAVAEA). Over 25–588 (ASGGGGGGDG…HGQRVNISKT (564 aa)) the chain is Extracellular. Residues asparagine 72 and asparagine 81 are each glycosylated (N-linked (GlcNAc...) asparagine). LRR repeat units follow at residues 75–98 (FAVLALNLSNLNLGGEISPAIGEL), 99–122 (KNLQFVDLKGNKLTGQIPDEIGDC), 124–146 (SLKYLDLSGNLLYGDIPFSISKL), 147–170 (KQLEELILKNNQLTGPIPSTLSQI), 171–194 (PNLKTLDLAQNQLTGDIPRLIYWN), 196–218 (VLQYLGLRGNSLTGTLSPDMCQL), 219–242 (TGLWYFDVRGNNLTGTIPESIGNC), 243–265 (TSFEILDISYNQISGEIPYNIGF), 266–289 (LQVATLSLQGNRLTGKIPDVIGLM), 290–312 (QALAVLDLSENELVGPIPSILGN), 314–337 (SYTGKLYLHGNKLTGVIPPELGNM), 338–361 (SKLSYLQLNDNELVGTIPAELGKL), 362–385 (EELFELNLANNNLQGPIPANISSC), 387–408 (ALNKFNVYGNKLNGSIPAGFQK), 409–433 (LESLTYLNLSSNNFKGNIPSELGHI), 435–457 (NLDTLDLSYNEFSGPVPATIGDL), 458–480 (EHLLELNLSKNHLDGPVPAEFGN), 481–505 (LRSVQVIDMSNNNLSGSLPEELGQL), 507–529 (NLDSLILNNNNLVGEIPAQLANC), and 531–554 (SLNNLNLSYNNLSGHVPMAKNFSK). N-linked (GlcNAc...) asparagine glycans are attached at residues asparagine 230 and asparagine 241. 2 N-linked (GlcNAc...) asparagine glycosylation sites follow: asparagine 312 and asparagine 336. Residues asparagine 381, asparagine 399, and asparagine 416 are each glycosylated (N-linked (GlcNAc...) asparagine). N-linked (GlcNAc...) asparagine glycosylation is found at asparagine 464 and asparagine 493. N-linked (GlcNAc...) asparagine glycosylation is found at asparagine 536, asparagine 541, asparagine 551, and asparagine 584. A helical transmembrane segment spans residues 589-609 (AIACIILGFIILLCVLLLAIY). Topologically, residues 610–980 (KTNQPQPLVK…FGEVISKHTM (371 aa)) are cytoplasmic. In terms of domain architecture, Protein kinase spans 653 to 923 (LSEKYIIGYG…EVARVLLSLL (271 aa)). Residues 659–667 (IGYGASSTV) and lysine 681 contribute to the ATP site. Residue aspartate 778 is the Proton acceptor of the active site.

It belongs to the protein kinase superfamily. Ser/Thr protein kinase family. In terms of processing, autophosphorylated. As to expression, expressed in nodes, vascular bundles of stems, and anthers.

It localises to the cell membrane. The enzyme catalyses L-seryl-[protein] + ATP = O-phospho-L-seryl-[protein] + ADP + H(+). It carries out the reaction L-threonyl-[protein] + ATP = O-phospho-L-threonyl-[protein] + ADP + H(+). Functionally, receptor kinase involved in salt drought stress responses. Acts as a positive regulator of salt and drought tolerance. May promote salt and drought tolerance through the induction of the activities of antioxidative enzymes, such as peroxidase, superoxide dismutase and catalase. May be involved in the control of stomatal development in leaf epidermis. Possesses kinase activity in vitro. Does not seem to be involved in heat tolerance. The polypeptide is LRR receptor-like serine/threonine-protein kinase SIK1 (Oryza sativa subsp. japonica (Rice)).